Here is a 338-residue protein sequence, read N- to C-terminus: Monopolar spindle protein 2 (338 aa).

Residues 149-228 are a coiled coil; sequence GDEQAREELE…IGQLRRQVQG (80 aa). A helical transmembrane segment spans residues 263 to 283; the sequence is AAFLLLLLGYFVWYTVMGGAV.

It belongs to the MPS2 family.

It localises to the nucleus membrane. The protein localises to the cytoplasm. It is found in the cytoskeleton. Its subcellular location is the microtubule organizing center. The protein resides in the spindle pole body. Functionally, component of the spindle pole body (SPB) required for insertion of the nascent SPB into the nuclear envelope and for the proper execution of spindle pole body (SPB) duplication. The protein is Monopolar spindle protein 2 (MPS2) of Eremothecium gossypii (strain ATCC 10895 / CBS 109.51 / FGSC 9923 / NRRL Y-1056) (Yeast).